A 159-amino-acid chain; its full sequence is Small ribosomal subunit protein uS17 (159 aa).

The protein belongs to the universal ribosomal protein uS17 family.

Its subcellular location is the cytoplasm. In Zea mays (Maize), this protein is Small ribosomal subunit protein uS17 (RPS11).